Reading from the N-terminus, the 1826-residue chain is Protein TIC 214 (1826 aa).

Helical transmembrane passes span 18–38 (IINS…FSIG), 67–87 (FITG…HLAL), 127–147 (LSIQ…HFIL), 175–195 (VGWL…LVWI), and 221–241 (IFSI…PSPI). Residues 250–308 (TEEGWESEEETDVEIETASETKGTKQEQEGSTEEDPSPSLFSEEKEDPDKIDETEEIRV) are disordered. Acidic residues-rich tracts occupy residues 252 to 266 (EGWE…EIET) and 293 to 304 (EKEDPDKIDETE). Residues 774–794 (LILIIQSIFRKYILLPSLIIV) form a helical membrane-spanning segment. The segment at 1032–1057 (TKGLMKEKNSNAKKRGSPNKTSFNRK) is disordered. Residues 1042-1057 (NAKKRGSPNKTSFNRK) are compositionally biased toward basic residues. The helical transmembrane segment at 1081–1101 (FYLFITIFIKRIYIDIFVCII) threads the bilayer.

The protein belongs to the TIC214 family. Part of the Tic complex.

Its subcellular location is the plastid. It is found in the chloroplast inner membrane. Involved in protein precursor import into chloroplasts. May be part of an intermediate translocation complex acting as a protein-conducting channel at the inner envelope. The polypeptide is Protein TIC 214 (Daucus carota (Wild carrot)).